We begin with the raw amino-acid sequence, 402 residues long: Imidazolonepropionase (402 aa).

Fe(3+) contacts are provided by His-69 and His-71. His-69 and His-71 together coordinate Zn(2+). 4-imidazolone-5-propanoate is bound by residues Arg-78, Tyr-141, and His-174. Tyr-141 contributes to the N-formimidoyl-L-glutamate binding site. His-239 is a binding site for Fe(3+). His-239 is a Zn(2+) binding site. Residue Gln-242 coordinates 4-imidazolone-5-propanoate. Asp-314 contributes to the Fe(3+) binding site. Residue Asp-314 coordinates Zn(2+). 2 residues coordinate N-formimidoyl-L-glutamate: Asn-316 and Gly-318. Residue Thr-319 coordinates 4-imidazolone-5-propanoate.

Belongs to the metallo-dependent hydrolases superfamily. HutI family. It depends on Zn(2+) as a cofactor. Fe(3+) is required as a cofactor.

The protein resides in the cytoplasm. The catalysed reaction is 4-imidazolone-5-propanoate + H2O = N-formimidoyl-L-glutamate. It functions in the pathway amino-acid degradation; L-histidine degradation into L-glutamate; N-formimidoyl-L-glutamate from L-histidine: step 3/3. Its function is as follows. Catalyzes the hydrolytic cleavage of the carbon-nitrogen bond in imidazolone-5-propanoate to yield N-formimidoyl-L-glutamate. It is the third step in the universal histidine degradation pathway. This Maricaulis maris (strain MCS10) (Caulobacter maris) protein is Imidazolonepropionase.